Here is a 410-residue protein sequence, read N- to C-terminus: NADH-quinone oxidoreductase subunit H (410 aa).

9 helical membrane-spanning segments follow: residues 11–31 (LVAA…LVAI), 79–99 (FVYF…FAFI), 119–139 (LPVA…GIVL), 160–180 (VISY…MAGT), 192–212 (GVWY…SMVG), 257–277 (ALAA…NMWA), 283–303 (WWPL…YFWL), 317–337 (ALGW…AAII), and 347–367 (YWTP…VLLL). Residues 376 to 410 (ARASARQRGDEGTSPEPAFPTPPLLAGATKENAGG) form a disordered region.

Belongs to the complex I subunit 1 family. NDH-1 is composed of 14 different subunits. Subunits NuoA, H, J, K, L, M, N constitute the membrane sector of the complex.

The protein localises to the cell membrane. The catalysed reaction is a quinone + NADH + 5 H(+)(in) = a quinol + NAD(+) + 4 H(+)(out). NDH-1 shuttles electrons from NADH, via FMN and iron-sulfur (Fe-S) centers, to quinones in the respiratory chain. The immediate electron acceptor for the enzyme in this species is believed to be menaquinone. Couples the redox reaction to proton translocation (for every two electrons transferred, four hydrogen ions are translocated across the cytoplasmic membrane), and thus conserves the redox energy in a proton gradient. This Mycobacterium bovis (strain ATCC BAA-935 / AF2122/97) protein is NADH-quinone oxidoreductase subunit H.